Consider the following 62-residue polypeptide: Large ribosomal subunit protein bL32 (62 aa).

The tract at residues 1 to 20 (MAVPARHTSKQKKRSRRGHI) is disordered. Over residues 7–20 (HTSKQKKRSRRGHI) the composition is skewed to basic residues.

Belongs to the bacterial ribosomal protein bL32 family.

The polypeptide is Large ribosomal subunit protein bL32 (Lactobacillus acidophilus (strain ATCC 700396 / NCK56 / N2 / NCFM)).